The chain runs to 93 residues: MSEEKAVSTEERGSRKVRTGYVVSDKMEKTIVVELEDRVKHPLYGKIIRRTSKVKAHDENGVAGIGDRVQLMETRPLSATKHWRLVEVLEKAK.

It belongs to the universal ribosomal protein uS17 family. In terms of assembly, part of the 30S ribosomal subunit.

One of the primary rRNA binding proteins, it binds specifically to the 5'-end of 16S ribosomal RNA. The chain is Small ribosomal subunit protein uS17 from Rhodococcus jostii (strain RHA1).